The sequence spans 210 residues: MEVKVLNKDGAETGETVELKPVIFEIEPNDHAIYLDVRSIMANQHQGTHKVKTRSEVSGGGRKPYRQKGTGNARRGSSRSPVMIGGGAIFGPKPHDYVVGINKKMKRLARISALSYKAKNNEIIVMEDYVPSEIKTKEVVSFLKSLGLNEKKTLLLMPSKNDVMYKSGRNISKLSILEANKASTYDLLNNKTLLIQKSALETLERSLGVA.

Positions Gln44–Arg79 are disordered.

Belongs to the universal ribosomal protein uL4 family. Part of the 50S ribosomal subunit.

One of the primary rRNA binding proteins, this protein initially binds near the 5'-end of the 23S rRNA. It is important during the early stages of 50S assembly. It makes multiple contacts with different domains of the 23S rRNA in the assembled 50S subunit and ribosome. In terms of biological role, forms part of the polypeptide exit tunnel. The protein is Large ribosomal subunit protein uL4 of Chloroherpeton thalassium (strain ATCC 35110 / GB-78).